A 205-amino-acid chain; its full sequence is ATP-dependent Clp protease proteolytic subunit 2 (205 aa).

Serine 100 acts as the Nucleophile in catalysis. Histidine 125 is a catalytic residue.

Belongs to the peptidase S14 family. Fourteen ClpP subunits assemble into 2 heptameric rings which stack back to back to give a disk-like structure with a central cavity, resembling the structure of eukaryotic proteasomes.

The protein resides in the cytoplasm. The enzyme catalyses Hydrolysis of proteins to small peptides in the presence of ATP and magnesium. alpha-casein is the usual test substrate. In the absence of ATP, only oligopeptides shorter than five residues are hydrolyzed (such as succinyl-Leu-Tyr-|-NHMec, and Leu-Tyr-Leu-|-Tyr-Trp, in which cleavage of the -Tyr-|-Leu- and -Tyr-|-Trp bonds also occurs).. Its function is as follows. Cleaves peptides in various proteins in a process that requires ATP hydrolysis. Has a chymotrypsin-like activity. Plays a major role in the degradation of misfolded proteins. The polypeptide is ATP-dependent Clp protease proteolytic subunit 2 (Chlamydia abortus (strain DSM 27085 / S26/3) (Chlamydophila abortus)).